We begin with the raw amino-acid sequence, 807 residues long: Probable phosphoketolase (807 aa).

This sequence belongs to the XFP family. Thiamine diphosphate is required as a cofactor.

This Nitrosospira multiformis (strain ATCC 25196 / NCIMB 11849 / C 71) protein is Probable phosphoketolase.